The chain runs to 412 residues: NADH-quinone oxidoreductase subunit D (412 aa).

Belongs to the complex I 49 kDa subunit family. NDH-1 is composed of 14 different subunits. Subunits NuoB, C, D, E, F, and G constitute the peripheral sector of the complex.

The protein resides in the cell inner membrane. It catalyses the reaction a quinone + NADH + 5 H(+)(in) = a quinol + NAD(+) + 4 H(+)(out). NDH-1 shuttles electrons from NADH, via FMN and iron-sulfur (Fe-S) centers, to quinones in the respiratory chain. The immediate electron acceptor for the enzyme in this species is believed to be a menaquinone. Couples the redox reaction to proton translocation (for every two electrons transferred, four hydrogen ions are translocated across the cytoplasmic membrane), and thus conserves the redox energy in a proton gradient. This Flavobacterium johnsoniae (strain ATCC 17061 / DSM 2064 / JCM 8514 / BCRC 14874 / CCUG 350202 / NBRC 14942 / NCIMB 11054 / UW101) (Cytophaga johnsonae) protein is NADH-quinone oxidoreductase subunit D.